The following is a 428-amino-acid chain: Enolase (428 aa).

Glutamine 165 is a binding site for (2R)-2-phosphoglycerate. Glutamate 207 acts as the Proton donor in catalysis. Residues aspartate 244, glutamate 285, and aspartate 312 each coordinate Mg(2+). Lysine 337, arginine 366, serine 367, and lysine 388 together coordinate (2R)-2-phosphoglycerate. The active-site Proton acceptor is lysine 337.

Belongs to the enolase family. Component of the RNA degradosome, a multiprotein complex involved in RNA processing and mRNA degradation. Mg(2+) serves as cofactor.

The protein resides in the cytoplasm. Its subcellular location is the secreted. It is found in the cell surface. It catalyses the reaction (2R)-2-phosphoglycerate = phosphoenolpyruvate + H2O. The protein operates within carbohydrate degradation; glycolysis; pyruvate from D-glyceraldehyde 3-phosphate: step 4/5. Its function is as follows. Catalyzes the reversible conversion of 2-phosphoglycerate (2-PG) into phosphoenolpyruvate (PEP). It is essential for the degradation of carbohydrates via glycolysis. This Coxiella burnetii (strain Dugway 5J108-111) protein is Enolase.